The sequence spans 199 residues: V-type proton ATPase subunit E (199 aa).

This sequence belongs to the V-ATPase E subunit family.

Its function is as follows. Produces ATP from ADP in the presence of a proton gradient across the membrane. This is V-type proton ATPase subunit E from Clostridium botulinum (strain 657 / Type Ba4).